Reading from the N-terminus, the 261-residue chain is Enoyl-[acyl-carrier-protein] reductase [NADH] FabI (261 aa).

NAD(+)-binding positions include glycine 15, 21–22, glutamine 42, 66–67, and methionine 94; these read SI and DV. Alanine 97 contributes to the substrate binding site. Residues tyrosine 147 and tyrosine 157 each act as proton acceptor in the active site. NAD(+) is bound by residues lysine 164 and 193–197; that span reads IKTLA.

Belongs to the short-chain dehydrogenases/reductases (SDR) family. FabI subfamily. As to quaternary structure, homotetramer.

It carries out the reaction a 2,3-saturated acyl-[ACP] + NAD(+) = a (2E)-enoyl-[ACP] + NADH + H(+). Its pathway is lipid metabolism; fatty acid biosynthesis. Its function is as follows. Catalyzes the reduction of a carbon-carbon double bond in an enoyl moiety that is covalently linked to an acyl carrier protein (ACP). Involved in the elongation cycle of fatty acid which are used in the lipid metabolism. The protein is Enoyl-[acyl-carrier-protein] reductase [NADH] FabI (fabI) of Rickettsia prowazekii (strain Madrid E).